The chain runs to 437 residues: Carboxypeptidase A6 (437 aa).

Positions 1 to 30 are cleaved as a signal peptide; sequence MKCLGKRRGQAAAFLPLCWLFLKILQPGHS. Residues 31–129 constitute a propeptide, activation peptide; it reads HLYNNRYAGD…SSLHTQRNRR (99 aa). N-linked (GlcNAc...) asparagine glycans are attached at residues asparagine 89 and asparagine 153. The Peptidase M14 domain maps to 138–432; sequence VYHSLEEIQN…LAVKNITMHL (295 aa). 2 residues coordinate Zn(2+): histidine 196 and glutamate 199. Substrate-binding positions include 196–199, arginine 254, and 271–272; these read HARE and NR. An intrachain disulfide couples cysteine 265 to cysteine 288. Histidine 324 contributes to the Zn(2+) binding site. Substrate contacts are provided by residues 325 to 326 and tyrosine 376; that span reads AY. Catalysis depends on glutamate 398, which acts as the Proton donor/acceptor. Residue asparagine 427 is glycosylated (N-linked (GlcNAc...) asparagine).

This sequence belongs to the peptidase M14 family. Zn(2+) is required as a cofactor. Expressed in the hippocampus, nucleus raphe, and cortex.

It is found in the secreted. The protein resides in the extracellular space. It localises to the extracellular matrix. In terms of biological role, may be involved in the proteolytic inactivation of enkephalins and neurotensin in some brain areas. May convert inactive angiotensin I into the biologically active angiotensin II. Releases a C-terminal amino acid, with preference for large hydrophobic C-terminal amino acids and shows only very weak activity toward small amino acids and histidine. The protein is Carboxypeptidase A6 (CPA6) of Homo sapiens (Human).